We begin with the raw amino-acid sequence, 187 residues long: tRNA (cytidine(56)-2'-O)-methyltransferase (187 aa).

S-adenosyl-L-methionine contacts are provided by residues leucine 94 and 120 to 124; that span reads GAEKV.

Belongs to the aTrm56 family. As to quaternary structure, homodimer.

The protein localises to the cytoplasm. It catalyses the reaction cytidine(56) in tRNA + S-adenosyl-L-methionine = 2'-O-methylcytidine(56) in tRNA + S-adenosyl-L-homocysteine + H(+). Its function is as follows. Specifically catalyzes the AdoMet-dependent 2'-O-ribose methylation of cytidine at position 56 in tRNAs. The protein is tRNA (cytidine(56)-2'-O)-methyltransferase of Hyperthermus butylicus (strain DSM 5456 / JCM 9403 / PLM1-5).